Here is a 75-residue protein sequence, read N- to C-terminus: Putative sulfur carrier protein YrkI (75 aa).

Cysteine 14 acts as the Cysteine persulfide intermediate in catalysis.

The protein belongs to the sulfur carrier protein TusA family.

This chain is Putative sulfur carrier protein YrkI (yrkI), found in Bacillus subtilis (strain 168).